Consider the following 469-residue polypeptide: Hydrogen cyanide synthase subunit HcnB (469 aa).

As to quaternary structure, heterotrimer of HcnA, HcnB and HcnC.

Its subcellular location is the cell membrane. The catalysed reaction is glycine + 2 A = hydrogen cyanide + 2 AH2 + CO2. A three-component membrane-bound flavoenzyme that catalyzes the formation of hydrogen cyanide, a secondary metabolite, by transfer of electrons to a cyanide-resistant branch of the aerobic respiratory chain. Contributes to suppression of black root rot of tobacco. The chain is Hydrogen cyanide synthase subunit HcnB from Pseudomonas protegens (strain DSM 19095 / LMG 27888 / CFBP 6595 / CHA0).